A 139-amino-acid polypeptide reads, in one-letter code: Putative nickel-responsive regulator (139 aa).

Ni(2+) is bound by residues histidine 79, histidine 90, histidine 92, and cysteine 98.

The protein belongs to the transcriptional regulatory CopG/NikR family. It depends on Ni(2+) as a cofactor.

Functionally, transcriptional regulator. The sequence is that of Putative nickel-responsive regulator from Geobacter metallireducens (strain ATCC 53774 / DSM 7210 / GS-15).